Reading from the N-terminus, the 328-residue chain is Alpha-tubulin N-acetyltransferase 2 (328 aa).

One can recognise an N-acetyltransferase domain in the interval 5-185 (SQVALLPKLS…NNFVVFHRYF (181 aa)). Acetyl-CoA contacts are provided by residues 119–132 (FFVDTSFQRKGFGK) and 155–164 (SVKFLAFLRK). Disordered stretches follow at residues 219 to 261 (EYQS…PGKK) and 282 to 328 (GGDP…TPEH). Positions 238 to 248 (TPPPPLPPPLV) are enriched in pro residues. Positions 312–328 (PTRSGVQYNIISGTPEH) are enriched in polar residues.

The protein belongs to the acetyltransferase ATAT1 family.

It catalyses the reaction L-lysyl-[alpha-tubulin] + acetyl-CoA = N(6)-acetyl-L-lysyl-[alpha-tubulin] + CoA + H(+). In terms of biological role, specifically acetylates 'Lys-40' in alpha-tubulin on the lumenal side of microtubules. Promotes microtubule destabilization and accelerates microtubule dynamics; this activity may be independent of acetylation activity. Acetylates alpha-tubulin with a slow enzymatic rate, due to a catalytic site that is not optimized for acetyl transfer. Enters the microtubule through each end and diffuses quickly throughout the lumen of microtubules. Acetylates only long/old microtubules because of its slow acetylation rate since it does not have time to act on dynamically unstable microtubules before the enzyme is released. This chain is Alpha-tubulin N-acetyltransferase 2, found in Trypanosoma cruzi (strain CL Brener).